Reading from the N-terminus, the 829-residue chain is Trimethylamine-N-oxide reductase (829 aa).

The tat-type signal signal peptide spans 1-31 (MNRRDFLKGIASSSFVVLGGSSVLTPLNALA). Ser180 provides a ligand contact to Mo-bis(molybdopterin guanine dinucleotide).

Belongs to the prokaryotic molybdopterin-containing oxidoreductase family. Mo-bis(molybdopterin guanine dinucleotide) is required as a cofactor. In terms of processing, predicted to be exported by the Tat system. The position of the signal peptide cleavage has been experimentally proven.

Its subcellular location is the periplasm. The enzyme catalyses trimethylamine + 2 Fe(III)-[cytochrome c] + H2O = trimethylamine N-oxide + 2 Fe(II)-[cytochrome c] + 3 H(+). Its function is as follows. Reduces trimethylamine-N-oxide (TMAO) into trimethylamine; an anaerobic reaction coupled to energy-yielding reactions. This Shewanella massilia protein is Trimethylamine-N-oxide reductase (torA).